The primary structure comprises 84 residues: Small ribosomal subunit protein uS17 (84 aa).

This sequence belongs to the universal ribosomal protein uS17 family. As to quaternary structure, part of the 30S ribosomal subunit.

Its function is as follows. One of the primary rRNA binding proteins, it binds specifically to the 5'-end of 16S ribosomal RNA. The polypeptide is Small ribosomal subunit protein uS17 (Borreliella burgdorferi (strain ATCC 35210 / DSM 4680 / CIP 102532 / B31) (Borrelia burgdorferi)).